The following is a 315-amino-acid chain: Olfactory receptor 4A8 (315 aa).

The Extracellular segment spans residues 1–24; that stretch reads MRQNNNITEFVLLGFSQYPDVQNA. The N-linked (GlcNAc...) asparagine glycan is linked to Asn6. Residues 25-45 traverse the membrane as a helical segment; the sequence is LFVMFLLIYIVTMVGNLLIVV. Over 46 to 57 the chain is Cytoplasmic; the sequence is SIIASPFLGSPV. A helical membrane pass occupies residues 58–80; it reads YFFLACLSFIDAVYSTTISPVLI. At 81 to 95 the chain is on the extracellular side; sequence VDLLCDKKTISFPAC. Residues Cys95 and Cys177 are joined by a disulfide bond. The chain crosses the membrane as a helical span at residues 96-116; the sequence is MGQLFIEHLFGDTDVFLLVVM. Residues 117–139 are Cytoplasmic-facing; sequence AYDRYVATCKPLRYLTIMNRQVC. Residues 140–160 form a helical membrane-spanning segment; it reads ILLLVVAVTGGFLHSVFQILV. Topologically, residues 161–193 are extracellular; it reads VYSLPFCGPNVIYHFFCNIYPLLDLECTDTYFV. The helical transmembrane segment at 194-214 threads the bilayer; it reads GLAVVFNGGAICMVIFTLLLI. Topologically, residues 215–235 are cytoplasmic; it reads SYGVILNSLKTYSPEGRHKAP. The chain crosses the membrane as a helical span at residues 236-256; that stretch reads FICSSHFIMVILFFVPCIFLY. Topologically, residues 257–266 are extracellular; it reads VRPVSNFPID. A helical membrane pass occupies residues 267 to 287; that stretch reads KFLTVFYSVITPKLNPFIYML. At 288-315 the chain is on the cytoplasmic side; sequence RNSEMRNAIENLLGYQSGKTGFRCSKLN.

It belongs to the G-protein coupled receptor 1 family.

Its subcellular location is the cell membrane. Its function is as follows. Odorant receptor. The polypeptide is Olfactory receptor 4A8 (OR4A8) (Homo sapiens (Human)).